We begin with the raw amino-acid sequence, 46 residues long: Succinate dehydrogenase subunit 8, mitochondrial (46 aa).

As to quaternary structure, component of complex II composed of eight subunits in plants: four classical SDH subunits SDH1, SDH2, SDH3 and SDH4 (a flavoprotein (FP), an iron-sulfur protein (IP), and a cytochrome b composed of a large and a small subunit.), as well as four subunits unknown in mitochondria from bacteria and heterotrophic eukaryotes.

It is found in the mitochondrion inner membrane. The protein operates within carbohydrate metabolism; tricarboxylic acid cycle. This chain is Succinate dehydrogenase subunit 8, mitochondrial, found in Arabidopsis thaliana (Mouse-ear cress).